The chain runs to 607 residues: T-box transcription factor TBX18 (607 aa).

An Engrailed homology 1 repressor motif is present at residues H18 to A28. Residues K30 to V141 form a disordered region. The Nuclear localization signal motif lies at K36–K40. Positions E44–G53 are enriched in low complexity. A DNA-binding region (T-box) is located at residues L143–D330.

Homodimer. Can form a heterodimer with TBX15. Interacts with GATA4 and NKX2-5. Interacts with PAX3. Interacts (via engrailed homology 1 repressor motif) with TLE3; this interaction represses TBX18 transcriptional activity. Interacts with SIX1.

The protein localises to the nucleus. In terms of biological role, acts as a transcriptional repressor involved in developmental processes of a variety of tissues and organs, including the heart and coronary vessels, the ureter and the vertebral column. Required for embryonic development of the sino atrial node (SAN) head area. In Homo sapiens (Human), this protein is T-box transcription factor TBX18 (TBX18).